Reading from the N-terminus, the 390-residue chain is Protein phosphatase methylesterase 1 (390 aa).

The segment at 19–50 (FGLSSLSEDPDESESNSNYFSPTPQPPNELRT) is disordered. The 233-residue stretch at 100–332 (PIFICHHGAG…NLIIGQMQGK (233 aa)) folds into the AB hydrolase-1 domain. Catalysis depends on residues Ser-186, Asp-213, and His-346.

It belongs to the AB hydrolase superfamily.

It catalyses the reaction [phosphatase 2A protein]-C-terminal L-leucine methyl ester + H2O = [phosphatase 2A protein]-C-terminal L-leucine + methanol + H(+). Demethylates proteins that have been reversibly carboxymethylated. Demethylates the phosphatase PP2A catalytic subunit. This is Protein phosphatase methylesterase 1 (PPE1) from Debaryomyces hansenii (strain ATCC 36239 / CBS 767 / BCRC 21394 / JCM 1990 / NBRC 0083 / IGC 2968) (Yeast).